A 133-amino-acid polypeptide reads, in one-letter code: ATP synthase epsilon chain (133 aa).

It belongs to the ATPase epsilon chain family. As to quaternary structure, F-type ATPases have 2 components, CF(1) - the catalytic core - and CF(0) - the membrane proton channel. CF(1) has five subunits: alpha(3), beta(3), gamma(1), delta(1), epsilon(1). CF(0) has three main subunits: a, b and c.

It is found in the cell membrane. Produces ATP from ADP in the presence of a proton gradient across the membrane. The sequence is that of ATP synthase epsilon chain from Clostridium perfringens (strain SM101 / Type A).